A 1090-amino-acid polypeptide reads, in one-letter code: Neurofilament heavy polypeptide (1090 aa).

The head stretch occupies residues 2 to 98 (MSFGSADALL…AVAARSEKEQ (97 aa)). A phosphoserine mark is found at S74 and S122. The 317-residue stretch at 95–411 (EKEQLQALND…KLLEGEECRI (317 aa)) folds into the IF rod domain. The segment at 99-130 (LQALNDRFAGYIDKVRQLEAHNRSLEGEAAAL) is coil 1A. The linker 1 stretch occupies residues 131-143 (RQQQAGRAAMGEL). The interval 144 to 242 (YEREVREMRG…QEEVGELLGQ (99 aa)) is coil 1B. Positions 243–264 (IQGCGAAQAQAQAEARDALKCD) are linker 12. The tract at residues 265–286 (VTSALREIRAQLEGHAVQSTLQ) is coil 2A. The linker 2 stretch occupies residues 287–290 (SEEW). A coil 2B region spans residues 291–411 (FRVRLDRLSE…KLLEGEECRI (121 aa)). Residues S345, S416, and S419 each carry the phosphoserine modification. Positions 412 to 1090 (GFGPSPFSLT…TEDKATKGEK (679 aa)) are tail. The interval 456–1090 (EGQTEEIRVT…TEDKATKGEK (635 aa)) is disordered. Residues 468–495 (VTEEEDKEAQGQEGEEAEEGEEKEEEEG) are compositionally biased toward acidic residues. Residues 496–506 (AAATSPPAEEA) are compositionally biased toward low complexity. S508, S523, S529, S535, S541, S547, S553, S559, S565, S571, S577, S583, S589, S595, S601, S607, S613, S619, S625, S631, S637, S643, S649, S655, S661, S667, S673, S679, S685, S691, S697, S703, S709, S715, S721, S727, S733, S739, S745, S751, S757, S763, and S769 each carry phosphoserine. Residues 508–579 (SPEKETKSRV…KSPAEAKSPA (72 aa)) are compositionally biased toward basic and acidic residues. 42 tandem repeats follow at residues 522–527 (KSPGEA), 528–533 (KSPGEA), 534–539 (KSPAEA), 540–545 (KSPGEA), 546–551 (KSPGEA), 552–557 (KSPGEA), 558–563 (KSPAEP), 564–569 (KSPAEP), 570–575 (KSPAEA), 576–581 (KSPAEP), 582–587 (KSPATV), 588–593 (KSPGEA), 594–599 (KSPSEA), 600–605 (KSPAEA), 606–611 (KSPAEA), 612–617 (KSPAEA), 618–623 (KSPAEA), 624–629 (KSPAEA), 630–635 (KSPAEA), 636–641 (KSPATV), 642–647 (KSPGEA), 648–653 (KSPSEA), 654–659 (KSPAEA), 660–665 (KSPAEA), 666–671 (KSPAEA), 672–677 (KSPAEV), 678–683 (KSPGEA), 684–689 (KSPAEP), 690–695 (KSPAEA), 696–701 (KSPAEV), 702–707 (KSPAEA), 708–713 (KSPAEV), 714–719 (KSPGEA), 720–725 (KSPAAV), 726–731 (KSPAEA), 732–737 (KSPAAV), 738–743 (KSPGEA), 744–749 (KSPGEA), 750–755 (KSPAEA), 756–761 (KSPAEA), 762–767 (KSPIEV), and 768–773 (KSPEKA). The tract at residues 522-892 (KSPGEAKSPG…KEEVKSPVKE (371 aa)) is 52 X 6 AA approximate tandem repeats of K-S-P-[AGISV]-[EATK]-[APVQ]. A compositionally biased stretch (basic and acidic residues) spans 595–633 (SPSEAKSPAEAKSPAEAKSPAEAKSPAEAKSPAEAKSPA). Over residues 649-717 (SPSEAKSPAE…KSPAEVKSPG (69 aa)) the composition is skewed to basic and acidic residues. Basic and acidic residues predominate over residues 745–781 (SPGEAKSPAEAKSPAEAKSPIEVKSPEKAKTPVKEGA). The 43; approximate repeat unit spans residues 774-779 (KTPVKE). 6 repeat units span residues 782–787 (KSPAEA), 788–793 (KSPEKA), 794–799 (KSPVKE), 808–813 (KSPEKA), 814–819 (KSPVKE), and 833–838 (KSPEAQ). Phosphoserine is present on residues S783, S789, S795, S809, S815, and S834. Over residues 788-834 (KSPEKAKSPVKEDIKPPAEAKSPEKAKSPVKEGAKPPEKAKPLDVKS) the composition is skewed to basic and acidic residues. At T839 the chain carries Phosphothreonine. Basic and acidic residues-rich tracts occupy residues 843 to 964 (EEAK…KAVA) and 974 to 1090 (GVKE…KGEK). Repeat copies occupy residues 858–863 (KSPAKE), 866–871 (KSPEKE), and 887–892 (KSPVKE). S859, S867, S888, and S947 each carry phosphoserine.

This sequence belongs to the intermediate filament family. As to quaternary structure, forms heterodimers with NEFL; which can further hetero-oligomerize (in vitro). Forms heterodimers with INA (in vitro). Post-translationally, there are a number of repeats of the tripeptide K-S-P, NFH is phosphorylated on a number of the serines in this motif. It is thought that phosphorylation of NFH results in the formation of interfilament cross bridges that are important in the maintenance of axonal caliber. In terms of processing, phosphorylation seems to play a major role in the functioning of the larger neurofilament polypeptides (NF-M and NF-H), the levels of phosphorylation being altered developmentally and coincidentally with a change in the neurofilament function. Phosphorylated in the head and rod regions by the PKC kinase PKN1, leading to the inhibition of polymerization. Expressed in the sciatic nerve (at protein level).

Its subcellular location is the cytoplasm. The protein localises to the cytoskeleton. It localises to the cell projection. It is found in the axon. Neurofilaments usually contain three intermediate filament proteins: NEFL, NEFM, and NEFH which are involved in the maintenance of neuronal caliber. NEFH has an important function in mature axons that is not subserved by the two smaller NF proteins. May additionally cooperate with the neuronal intermediate filament proteins PRPH and INA to form neuronal filamentous networks. This is Neurofilament heavy polypeptide (Nefh) from Mus musculus (Mouse).